A 706-amino-acid polypeptide reads, in one-letter code: MGKEQQLYYGKHGTPQKYDPAFRGPIYNRGCTDIICCVFLFLAIVGYVAVGIIAWTHGDPRKVIYPTDSRGQFCGQKGTKNENKPFLFYFNIVKCASPLVLLEFQCPTPQICVEKCPSRYLTYLNAHASEDFEYYKQYCLPGFQKNKGVAEVLRDGDCPAVLIPSKPFAQRCFPAVHAHKGILMVGNETTYEDGLGSRKNITELVEGAKKASGILEARQLAMRIFEDYTVSWYWIIIGLIIAMVLSLLFIILLRFLAGIMVWVMIVMVILVLGYGILHCYMEYARLRGEAGSDVSLVDLGFQTDFRVYLHLRQTWVAFMIILSIVEVIIILLLIFLRKRILIAIALIKEASRAVGYVMCSLLYPLVTFFLLCLCIAYWASTAIFLSTSNEAVYKIFNETSCPVAGKTCNPETFPSSNESRLCPGAHCQFAFYGGESTYHRALLGLQIFNVFMFFWLANFVLALGQVTLAGAFASYYWAMNKPDDLPAFPLFSAFGRALRYHTGSLAFGSLLLAIVQVIRVILEYLDQRLKAAENKFAKFLMSCLKCCFWCLEKFIKFLNRNAYIMIAIYGTNFCTSARNAFFLLMRNIIRVAVLDKVTDFLFLLGKLLIVGSVGILAFFFFTHRIRIVQDTAPSLNYYWVPVVTVVIGSYLIAHGFFSVYGMCVDTLFLCFLEDLERNDGTPERPYFMSLTLKKILNKTNKRQAEA.

The Cytoplasmic segment spans residues M1–D33. T14 bears the Phosphothreonine mark. A helical membrane pass occupies residues I34 to A54. Topologically, residues W55–W232 are extracellular. 2 N-linked (GlcNAc...) asparagine glycosylation sites follow: N187 and N200. Residues Y233–L253 form a helical membrane-spanning segment. Residues R254 to L256 are Cytoplasmic-facing. A helical transmembrane segment spans residues A257–L277. Residues H278–W315 are Extracellular-facing. The chain crosses the membrane as a helical span at residues V316–L336. Residues R337–P364 are Cytoplasmic-facing. A helical transmembrane segment spans residues L365–L385. Over S386–A457 the chain is Extracellular. N397 and N417 each carry an N-linked (GlcNAc...) asparagine glycan. The helical transmembrane segment at N458–N480 threads the bilayer. The Cytoplasmic portion of the chain corresponds to K481 to S504. The helical transmembrane segment at L505 to L525 threads the bilayer. Topologically, residues D526–Y563 are extracellular. A helical membrane pass occupies residues I564–L584. The Cytoplasmic segment spans residues M585–D599. Residues F600 to F620 form a helical membrane-spanning segment. Topologically, residues F621–Y638 are extracellular. The chain crosses the membrane as a helical span at residues W639–V659. The Cytoplasmic segment spans residues Y660–A706.

The protein belongs to the CTL (choline transporter-like) family. In terms of assembly, interacts with COCH. N-glycosylated.

Its subcellular location is the cell membrane. The protein resides in the mitochondrion outer membrane. It catalyses the reaction choline(out) + n H(+)(in) = choline(in) + n H(+)(out). The catalysed reaction is ethanolamine(out) + n H(+)(in) = ethanolamine(in) + n H(+)(out). In terms of biological role, choline/H+ antiporter, mainly in mitochodria. Also acts as a low-affinity ethanolamine/H+ antiporter, regulating the supply of extracellular ethanolamine (Etn) for the CDP-Etn pathway, redistribute intracellular Etn and balance the CDP-Cho and CDP-Etn arms of the Kennedy pathway. The polypeptide is Choline transporter-like protein 2 (SLC44A2) (Bos taurus (Bovine)).